Here is a 203-residue protein sequence, read N- to C-terminus: ATP-dependent Clp protease proteolytic subunit (203 aa).

The Nucleophile role is filled by S103. Residue H128 is part of the active site.

Belongs to the peptidase S14 family. As to quaternary structure, fourteen ClpP subunits assemble into 2 heptameric rings which stack back to back to give a disk-like structure with a central cavity, resembling the structure of eukaryotic proteasomes.

The protein localises to the cytoplasm. The catalysed reaction is Hydrolysis of proteins to small peptides in the presence of ATP and magnesium. alpha-casein is the usual test substrate. In the absence of ATP, only oligopeptides shorter than five residues are hydrolyzed (such as succinyl-Leu-Tyr-|-NHMec, and Leu-Tyr-Leu-|-Tyr-Trp, in which cleavage of the -Tyr-|-Leu- and -Tyr-|-Trp bonds also occurs).. Cleaves peptides in various proteins in a process that requires ATP hydrolysis. Has a chymotrypsin-like activity. Plays a major role in the degradation of misfolded proteins. This chain is ATP-dependent Clp protease proteolytic subunit, found in Nitrosococcus oceani (strain ATCC 19707 / BCRC 17464 / JCM 30415 / NCIMB 11848 / C-107).